The sequence spans 115 residues: MKFVLLFGVLLVTLFSYSSAEMFDDFDQADEDELLSLIEKEEARAKECTPRFYDCSHDRHSCCRSELFKDVCTCFYPEGGDNEVCTCQQPKHLKYMEKAAGKAKKFGGKVKKWFG.

A signal peptide spans 1–20 (MKFVLLFGVLLVTLFSYSSA). Positions 21 to 44 (EMFDDFDQADEDELLSLIEKEEAR) are excised as a propeptide. 4 disulfides stabilise this stretch: Cys-48-Cys-63, Cys-55-Cys-72, Cys-62-Cys-87, and Cys-74-Cys-85.

Belongs to the neurotoxin 19 (CSTX) family. 01 subfamily. As to expression, expressed by the venom gland.

It is found in the secreted. This is U3-lycotoxin-Ls1q from Lycosa singoriensis (Wolf spider).